The following is a 175-amino-acid chain: Cuticle protein 16.5, isoform B (175 aa).

19 repeat units span residues 17 to 20 (AAPA), 25 to 28 (AAPA), 31 to 34 (AAPA), 38 to 41 (AAPA), 44 to 47 (AAPA), 51 to 54 (AAPA), 57 to 60 (AAPA), 64 to 67 (AAPA), 70 to 73 (AAPA), 77 to 80 (AAPA), 83 to 86 (AAPA), 91 to 94 (AAPA), 99 to 102 (AAPA), 106 to 109 (AAPA), 134 to 137 (AAPA), 144 to 147 (AAPA), 151 to 154 (AAPA), 158 to 161 (AAPA), and 165 to 168 (AAPA).

Functionally, component of the cuticle of migratory locust which contains more than 100 different structural proteins. The sequence is that of Cuticle protein 16.5, isoform B from Locusta migratoria (Migratory locust).